An 802-amino-acid polypeptide reads, in one-letter code: Post-transcriptional regulator mkt1 (802 aa).

3 positions are modified to phosphoserine: Ser-227, Ser-228, and Ser-230.

This sequence belongs to the XPG/RAD2 endonuclease family. As to quaternary structure, interacts with pab1 binding protein ath1.

In terms of biological role, involved in post-transcriptional regulation of gene expression by 3'-UTR-mediated RNA regulation. Promotes interactions between mRNA and poly(A)-binding protein. Binds the 3' UTR of mRNAs, centromeric transcripts and antisense-rDNA. Required for the establishment but not the maintenance of heterochromatin at pericentromeres, and for the maintenance of small domains of facultative heterochromatin known as HOODs. The chain is Post-transcriptional regulator mkt1 from Schizosaccharomyces pombe (strain 972 / ATCC 24843) (Fission yeast).